The following is a 469-amino-acid chain: Phenolic glucoside malonyltransferase 1 (469 aa).

At methionine 1 the chain carries N-acetylmethionine. Histidine 169 (proton acceptor) is an active-site residue. Positions 169 to 173 match the HXXXD motif motif; that stretch reads HAVLD. Position 291–292 (291–292) interacts with malonyl-CoA; sequence ST. Aspartate 413 acts as the Proton acceptor in catalysis. Positions 413-417 match the DFGWG motif motif; sequence DFGWG.

It belongs to the plant acyltransferase family. Phenolic glucoside malonyltransferase subfamily.

The enzyme catalyses a flavonol 3-O-beta-D-glucoside + malonyl-CoA = a flavonol 3-O-(6-O-malonyl-beta-D-glucoside) + CoA. The catalysed reaction is a flavonol 7-O-beta-D-glucoside + malonyl-CoA = a flavonol 7-O-(6-O-malonyl-beta-D-glucoside) + CoA. Functionally, malonyltransferase acting on xenobiotic glucosides. Has activity toward 2-Naphthol glucoside (2NAG), 1-Naphthol glucoside (1NAG), kaempferol 7-O-glucoside, kaempferol 3-O-glucoside, hydroxycoumarin glucosides, phenol-glucosides and isoflavone glucoside (daidzin), but not toward 4-coumaroyl glucoside, kaempferol 3,7-O-diglucoside, salicylic acid glucoside and phlorizin. In vivo, seems to be involved in the malonylation of 2-Naphthol glucoside while PMAT2 would be involved in the malonylation of 4-methylumbelliferone glucoside or 4-nitrophenyl glucoside. The chain is Phenolic glucoside malonyltransferase 1 (PMAT1) from Arabidopsis thaliana (Mouse-ear cress).